The primary structure comprises 52 residues: Alpha-1-antiproteinase 3 (52 aa).

The disordered stretch occupies residues 1–20 (EDLQGDAVPEEXATKDDNEH).

It belongs to the serpin family. N-glycosylated; contains glycans with bi- and triantennary side chains. Plasma.

The protein resides in the secreted. The polypeptide is Alpha-1-antiproteinase 3 (Equus caballus (Horse)).